The primary structure comprises 332 residues: MKTLGEFIVEKQHEFSQATGELTALLSAIKLGAKIIHRDINKAGLVDILGASGAENVQGEVQQKLDLFANEKLKAALKARDIVAGIASEEEDEIVVFEGCEHAKYVVLMDPLDGSSNIDVNVSVGTIFSIYRRVTPVGTPVTEEDFLQPGNKQVAAGYVVYGSSTMLVYTTGCGVHAFTYDPSLGVFCLCQERMRFPEKGKTYSINEGNYIKFPNGVKKYIKFCQEEDSSTSRPYTSRYIGSLVADFHRNLLKGGIYLYPSTASHPQGKLRLLYECNPMAFLAEQAGGKASDGKERILDIIPESLHQRRSFFVGNRHMVDDVERFIREYPDA.

Residues E89, D110, L112, and D113 each coordinate Mg(2+). Residues 113–116 (DGSS), N206, Y239, 257–259 (YLY), and K269 each bind substrate. Residue E275 coordinates Mg(2+).

It belongs to the FBPase class 1 family. As to quaternary structure, homotetramer. The cofactor is Mg(2+).

It localises to the cytoplasm. It catalyses the reaction beta-D-fructose 1,6-bisphosphate + H2O = beta-D-fructose 6-phosphate + phosphate. It participates in carbohydrate biosynthesis; gluconeogenesis. The chain is Fructose-1,6-bisphosphatase class 1 from Salmonella typhimurium (strain LT2 / SGSC1412 / ATCC 700720).